The chain runs to 292 residues: 2-(5''-triphosphoribosyl)-3'-dephosphocoenzyme-A synthase (292 aa).

The protein belongs to the CitG/MdcB family.

The catalysed reaction is 3'-dephospho-CoA + ATP = 2'-(5''-triphospho-alpha-D-ribosyl)-3'-dephospho-CoA + adenine. Functionally, catalyzes the formation of 2-(5''-triphosphoribosyl)-3'-dephosphocoenzyme-A, the precursor of the prosthetic group of the holo-acyl carrier protein (gamma chain) of citrate lyase, from ATP and dephospho-CoA. In Escherichia coli (strain SMS-3-5 / SECEC), this protein is 2-(5''-triphosphoribosyl)-3'-dephosphocoenzyme-A synthase.